The chain runs to 270 residues: Energy-coupling factor transporter ATP-binding protein EcfA (270 aa).

The ABC transporter domain occupies 5–238 (VEIENLTFFY…QLLEQNGLKA (234 aa)). Position 38–45 (38–45 (GHNGAGKS)) interacts with ATP.

This sequence belongs to the ABC transporter superfamily. Energy-coupling factor EcfA family. As to quaternary structure, forms a stable energy-coupling factor (ECF) transporter complex composed of 2 membrane-embedded substrate-binding proteins (S component), 2 ATP-binding proteins (A component) and 2 transmembrane proteins (T component).

It is found in the cell membrane. In terms of biological role, ATP-binding (A) component of a common energy-coupling factor (ECF) ABC-transporter complex. Unlike classic ABC transporters this ECF transporter provides the energy necessary to transport a number of different substrates. The sequence is that of Energy-coupling factor transporter ATP-binding protein EcfA from Carboxydothermus hydrogenoformans (strain ATCC BAA-161 / DSM 6008 / Z-2901).